A 349-amino-acid polypeptide reads, in one-letter code: 5-deoxyribose 1-phosphate isomerase (349 aa).

Substrate is bound by residues 49 to 51 (RGA), Arg92, and Gln199. Asp240 (proton donor) is an active-site residue. Substrate is bound at residue 250–251 (NK).

This sequence belongs to the EIF-2B alpha/beta/delta subunits family. DrdI subfamily.

It catalyses the reaction 5-deoxy-alpha-D-ribose 1-phosphate = 5-deoxy-D-ribulose 1-phosphate. Its pathway is carbohydrate degradation. Functionally, catalyzes the isomerization of 5-deoxy-alpha-D-ribose 1-phosphate to 5-deoxy-D-ribulose 1-phosphate, as part of a 5-deoxyribose salvage pathway that recycles this toxic radical SAM enzyme by-product to mainstream metabolites. The chain is 5-deoxyribose 1-phosphate isomerase from Clostridium botulinum (strain Loch Maree / Type A3).